The primary structure comprises 673 residues: UvrABC system protein B (673 aa).

The Helicase ATP-binding domain occupies 26-183 (EGLEDGLAHQ…RRLAELQYAR (158 aa)). 39–46 (GVTGSGKT) contributes to the ATP binding site. Positions 92-115 (YYDYYQPEAYVPSSDTFIEKDASV) match the Beta-hairpin motif. Residues 431–597 (QVDDLLSEIR…GLNKKVVDIL (167 aa)) form the Helicase C-terminal domain. A disordered region spans residues 608–627 (AKGRGKSRPIVEPDNVPMDM). The region spanning 633 to 668 (QQKIHELEGLMMQHAQNLEFEEAAQIRDQLHQLRDL) is the UVR domain.

It belongs to the UvrB family. In terms of assembly, forms a heterotetramer with UvrA during the search for lesions. Interacts with UvrC in an incision complex.

It localises to the cytoplasm. Functionally, the UvrABC repair system catalyzes the recognition and processing of DNA lesions. A damage recognition complex composed of 2 UvrA and 2 UvrB subunits scans DNA for abnormalities. Upon binding of the UvrA(2)B(2) complex to a putative damaged site, the DNA wraps around one UvrB monomer. DNA wrap is dependent on ATP binding by UvrB and probably causes local melting of the DNA helix, facilitating insertion of UvrB beta-hairpin between the DNA strands. Then UvrB probes one DNA strand for the presence of a lesion. If a lesion is found the UvrA subunits dissociate and the UvrB-DNA preincision complex is formed. This complex is subsequently bound by UvrC and the second UvrB is released. If no lesion is found, the DNA wraps around the other UvrB subunit that will check the other stand for damage. This is UvrABC system protein B from Escherichia coli O7:K1 (strain IAI39 / ExPEC).